The following is a 397-amino-acid chain: LIM/homeobox protein Lhx9 (397 aa).

The interval 40–60 (RSKTESRLAKGGQMNGRETNM) is disordered. LIM zinc-binding domains lie at 69-130 (ALCA…RFSV) and 131-193 (QRCA…LLQG). Positions 267-326 (TKRMATSFKHHQLRTMKSYFAINHNPDAKDLKQLAQKTGLTKRVLQVWFQNARAKFRRNL) form a DNA-binding region, homeobox. Disordered stretches follow at residues 330-363 (ENGG…TTLT) and 378-397 (SNLD…TNLF). Positions 353–363 (LTPPGTATTLT) are enriched in low complexity. Over residues 387 to 397 (SPSQTTLTNLF) the composition is skewed to polar residues.

The protein localises to the nucleus. May be involved in gonadal development. In Gallus gallus (Chicken), this protein is LIM/homeobox protein Lhx9 (LHX9).